The following is a 215-amino-acid chain: MKKPYRKISDYAIVGGLSALVMVSIVGCKSNADDKPKEQSSLSQSVQKGAFVILEEQKDKSYKVVEEYPSSRTHIVVRDLQGNERVLSNEEIQKLIKEEEAKIDNGTSKLVQPNNGGSNEGSGFGLGSAILGSAAGAILGSYIGNKLFNNPNYQQNAQRTYKSPQAYQRSQNSFSKSAPSASSMGTASKGQSGFFGSSRPTSSPAISSGTRGFNA.

Residues 1–27 form the signal peptide; that stretch reads MKKPYRKISDYAIVGGLSALVMVSIVG. Residue cysteine 28 is the site of N-palmitoyl cysteine attachment. A lipid anchor (S-diacylglycerol cysteine) is attached at cysteine 28. Residues 158–169 are compositionally biased toward polar residues; that stretch reads QRTYKSPQAYQR. A disordered region spans residues 158–215; the sequence is QRTYKSPQAYQRSQNSFSKSAPSASSMGTASKGQSGFFGSSRPTSSPAISSGTRGFNA. Positions 170-183 are enriched in low complexity; that stretch reads SQNSFSKSAPSASS. The span at 184–195 shows a compositional bias: polar residues; the sequence is MGTASKGQSGFF. The span at 197-208 shows a compositional bias: low complexity; it reads SSRPTSSPAISS.

Belongs to the UPF0323 family.

It is found in the cell membrane. This chain is UPF0323 lipoprotein jhp_0217, found in Helicobacter pylori (strain J99 / ATCC 700824) (Campylobacter pylori J99).